A 364-amino-acid chain; its full sequence is tRNA 2-selenouridine synthase (364 aa).

Residues 15–138 (FVNDTPLMDM…LRRFLIETID (124 aa)) enclose the Rhodanese domain. Cys98 acts as the S-selanylcysteine intermediate in catalysis.

The protein belongs to the SelU family. Monomer.

The enzyme catalyses 5-methylaminomethyl-2-thiouridine(34) in tRNA + selenophosphate + (2E)-geranyl diphosphate + H2O + H(+) = 5-methylaminomethyl-2-selenouridine(34) in tRNA + (2E)-thiogeraniol + phosphate + diphosphate. It catalyses the reaction 5-methylaminomethyl-2-thiouridine(34) in tRNA + (2E)-geranyl diphosphate = 5-methylaminomethyl-S-(2E)-geranyl-thiouridine(34) in tRNA + diphosphate. The catalysed reaction is 5-methylaminomethyl-S-(2E)-geranyl-thiouridine(34) in tRNA + selenophosphate + H(+) = 5-methylaminomethyl-2-(Se-phospho)selenouridine(34) in tRNA + (2E)-thiogeraniol. It carries out the reaction 5-methylaminomethyl-2-(Se-phospho)selenouridine(34) in tRNA + H2O = 5-methylaminomethyl-2-selenouridine(34) in tRNA + phosphate. In terms of biological role, involved in the post-transcriptional modification of the uridine at the wobble position (U34) of tRNA(Lys), tRNA(Glu) and tRNA(Gln). Catalyzes the conversion of 2-thiouridine (S2U-RNA) to 2-selenouridine (Se2U-RNA). Acts in a two-step process involving geranylation of 2-thiouridine (S2U) to S-geranyl-2-thiouridine (geS2U) and subsequent selenation of the latter derivative to 2-selenouridine (Se2U) in the tRNA chain. The polypeptide is tRNA 2-selenouridine synthase (Photobacterium profundum (strain SS9)).